The following is a 212-amino-acid chain: Probable GTP-binding protein EngB (212 aa).

One can recognise an EngB-type G domain in the interval 27 to 201 (GGIEIAFAGR…TRILSDWYQP (175 aa)). GTP is bound by residues 35–42 (GRSNAGKS), 62–66 (GRTQL), 80–83 (DLPG), 147–150 (TKAD), and 180–182 (FSS). 2 residues coordinate Mg(2+): S42 and T64.

This sequence belongs to the TRAFAC class TrmE-Era-EngA-EngB-Septin-like GTPase superfamily. EngB GTPase family. Mg(2+) is required as a cofactor.

In terms of biological role, necessary for normal cell division and for the maintenance of normal septation. This Tolumonas auensis (strain DSM 9187 / NBRC 110442 / TA 4) protein is Probable GTP-binding protein EngB.